Reading from the N-terminus, the 271-residue chain is Dioscorin dioA3 (271 aa).

Residues 1–21 (MSSSTLLHLLLLSSLLFSCLS) form the signal peptide. Residues 28–262 (DEFSYIEGNP…TNFRSVFYFE (235 aa)) enclose the Alpha-carbonic anhydrase domain. Cysteine 53 and cysteine 212 are joined by a disulfide. The active-site Proton acceptor is the histidine 94. L-ascorbate-binding positions include aspartate 95, 120 to 122 (HFH), glutamine 139, and 208 to 209 (TA).

The protein belongs to the alpha-carbonic anhydrase family. In terms of assembly, monomer. Homodimer. Post-translationally, not glycosylated. In terms of tissue distribution, expressed in tuber (at protein level).

It catalyses the reaction hydrogencarbonate + H(+) = CO2 + H2O. It carries out the reaction 2 monodehydro-L-ascorbate radical + NADH + H(+) = 2 L-ascorbate + NAD(+). The carbonate dehydratase activity is not substantially changed by the addition of Zn(2+). Storage protein of tuber. Involved in protection against oxidative stress. Has carbonate dehydratase, trypsin inhibitor, dehydroascorbate (DHA) reductase and monodehydroascorbate (MDA) reductase activities. Catalyzes the reactions of carbonate dehydratase and DHA reductase independently of zinc and glutathione (GSH). The coupled reaction is capable of recycling a plant antioxidant ascorbate using ubiquitous compounds H(2)O and CO(2). Exhibits antioxidant activity. Able to scavenge 1,1-diphenyl-2-picrylhydrazyl (DPPH) radical. Exhibits immunomodulatory activity. Activates Toll-like receptor 4 signaling pathways by up-regulating the gene expression of pro-inflammatory cytokines, such as tumor necrosis factor alpha, interleukin-1 beta and interleukin-6, and chemokines RANTES and MCP-1, in mouse RAW 264.7 macrophages. Stimulates the phagocytosis of E.coli by the LPS-treated mouse macrophages. This Dioscorea japonica (Japanese yam) protein is Dioscorin dioA3.